The following is a 77-amino-acid chain: uncharacterized protein (77 aa).

It localises to the plastid. It is found in the cyanelle. This is an uncharacterized protein from Cyanophora paradoxa.